A 151-amino-acid polypeptide reads, in one-letter code: UPF0208 membrane protein Ent638_2839 (151 aa).

The next 2 helical transmembrane spans lie at 46-65 (YAIR…QIAL) and 69-91 (LGPA…WWLG).

Belongs to the UPF0208 family.

The protein localises to the cell inner membrane. The polypeptide is UPF0208 membrane protein Ent638_2839 (Enterobacter sp. (strain 638)).